The chain runs to 277 residues: Small ribosomal subunit protein uS2 (277 aa).

The disordered stretch occupies residues 226–277 (GQQARADRGEDLGAAVEPVAEPALVEEAAAPVTEDEQVPAEAAAETERQSDA). Positions 239 to 257 (AAVEPVAEPALVEEAAAPV) are enriched in low complexity.

The protein belongs to the universal ribosomal protein uS2 family.

The sequence is that of Small ribosomal subunit protein uS2 from Sphingopyxis alaskensis (strain DSM 13593 / LMG 18877 / RB2256) (Sphingomonas alaskensis).